The sequence spans 581 residues: Phosphatidylinositol N-acetylglucosaminyltransferase subunit Q (581 aa).

5 consecutive transmembrane segments (helical) span residues 276-298, 344-366, 381-403, 446-468, and 478-500; these read ANMLVSVLLDVALGLLLLSWLHS, LGRFFLYHIHLWISYIHLMSPFI, LTVALSIFSDIIALLTFHIYCFY, LFIGTLLFTILVFLLPTTALYYL, and ITVQGLIHLLVDLINSLPLYSLG.

Belongs to the PIGQ family. In terms of assembly, component of the glycosylphosphatidylinositol-N-acetylglucosaminyltransferase (GPI-GnT) complex composed at least by PIGA, PIGC, PIGH, PIGP, PIGQ, PIGY and DPM2. Interacts with PIGA, PIGH and PIGC.

The protein resides in the membrane. Its pathway is glycolipid biosynthesis; glycosylphosphatidylinositol-anchor biosynthesis. In terms of biological role, part of the glycosylphosphatidylinositol-N-acetylglucosaminyltransferase (GPI-GnT) complex that catalyzes the transfer of N-acetylglucosamine from UDP-N-acetylglucosamine to phosphatidylinositol and participates in the first step of GPI biosynthesis. This is Phosphatidylinositol N-acetylglucosaminyltransferase subunit Q from Mus musculus (Mouse).